The chain runs to 2212 residues: RNA-directed RNA polymerase L (2212 aa).

Residues 30–288 (KDALLSQVHP…SHEENDSLDC (259 aa)) are endonuclease. Mn(2+) is bound by residues E55, D93, and E106. K119 is an active-site residue. The tract at residues 922–942 (MKSSDAREERLQDPKRNEKNA) is disordered. Over residues 923 to 942 (KSSDAREERLQDPKRNEKNA) the composition is skewed to basic and acidic residues. The RdRp catalytic domain maps to 1175 to 1371 (CDMKMAVNNG…YLSSKLNKFV (197 aa)). D1333 provides a ligand contact to Mg(2+).

Belongs to the Bunyavirales RNA polymerase family. Homomultimer; the oligomeric structure is essential for the polymerase activity. Interacts with nucleoprotein N. Interacts with protein Z; this interaction inhibits viral transcription and replication, Z partially blocks the product exit tunnel for the releasing nascent RNA product. Mn(2+) is required as a cofactor. Mg(2+) serves as cofactor.

It localises to the virion. The protein localises to the host cytoplasm. It carries out the reaction RNA(n) + a ribonucleoside 5'-triphosphate = RNA(n+1) + diphosphate. In terms of biological role, RNA-dependent RNA polymerase, which is responsible for the replication and transcription of the viral RNA genome using antigenomic RNA as an intermediate. During transcription, synthesizes subgenomic RNAs and assures their capping by a cap-snatching mechanism, which involves the endonuclease activity cleaving the host capped pre-mRNAs. These short capped RNAs are then used as primers for viral transcription. The 3'-end of subgenomic mRNAs molecules are heterogeneous and not polyadenylated. The replicase function is to direct synthesis of antigenomic and genomic RNA which are encapsidated and non capped. As a consequence of the use of the same enzyme for both transcription and replication, these mechanisms need to be well coordinated. These processes may be regulated by proteins N and Z in a dose-dependent manner. Z protein inhibits the viral polymerase L und thus the viral transcription and RNA synthesis. The protein is RNA-directed RNA polymerase L of Sabia mammarenavirus (isolate Human/Brasil/SPH114202/1990) (SABV).